We begin with the raw amino-acid sequence, 450 residues long: 3-keto-steroid reductase erg27 (450 aa).

Positions 25, 53, and 59 each coordinate NADP(+). Residues serine 215 and tyrosine 238 each act as proton donor in the active site. NADP(+) is bound by residues tyrosine 238, lysine 242, and threonine 296. The active-site Lowers pKa of active site Tyr is lysine 242.

This sequence belongs to the short-chain dehydrogenases/reductases (SDR) family. ERG27 subfamily. As to quaternary structure, heterotetramer of erg25, erg26, erg27 and erg28. Erg28 acts as a scaffold to tether erg27 and other 4,4-demethylation-related enzymes, forming a demethylation enzyme complex, in the endoplasmic reticulum.

The protein resides in the endoplasmic reticulum membrane. The protein localises to the lipid droplet. Its pathway is steroid metabolism; ergosterol biosynthesis. In terms of biological role, sterol-C4-methyl oxidase; part of the third module of ergosterol biosynthesis pathway that includes the late steps of the pathway. Erg27 is a catalytic component of the C-4 demethylation complex that catalyzes the conversion of 4,4-dimethylfecosterol into fecosterol via 4-methylfecosterol. The third module or late pathway involves the ergosterol synthesis itself through consecutive reactions that mainly occur in the endoplasmic reticulum (ER) membrane. Firstly, the squalene synthase erg9 catalyzes the condensation of 2 farnesyl pyrophosphate moieties to form squalene, which is the precursor of all steroids. Squalene synthase is crucial for balancing the incorporation of farnesyl diphosphate (FPP) into sterol and nonsterol isoprene synthesis. Secondly, squalene is converted into lanosterol by the consecutive action of the squalene epoxidase erg1 and the lanosterol synthase erg7. Then, the delta(24)-sterol C-methyltransferase erg6 methylates lanosterol at C-24 to produce eburicol. Eburicol is the substrate of the sterol 14-alpha demethylase encoded by cyp51A and cyp51B, to yield 4,4,24-trimethyl ergosta-8,14,24(28)-trienol. The C-14 reductase erg24 then reduces the C14=C15 double bond which leads to 4,4-dimethylfecosterol. A sequence of further demethylations at C-4, involving the C-4 demethylation complex containing the C-4 methylsterol oxidases erg25A or erg25B, the sterol-4-alpha-carboxylate 3-dehydrogenase erg26 and the 3-keto-steroid reductase erg27, leads to the production of fecosterol via 4-methylfecosterol. The C-8 sterol isomerase erg2 then catalyzes the reaction which results in unsaturation at C-7 in the B ring of sterols and thus converts fecosterol to episterol. The sterol-C5-desaturase erg3B then catalyzes the introduction of a C-5 double bond in the B ring to produce 5-dehydroepisterol. The 2 other sterol-C5-desaturases, erg3A and erg3C, seem to be less important in ergosterol biosynthesis. The C-22 sterol desaturase erg5 further converts 5-dehydroepisterol into ergosta-5,7,22,24(28)-tetraen-3beta-ol by forming the C-22(23) double bond in the sterol side chain. Finally, ergosta-5,7,22,24(28)-tetraen-3beta-ol is substrate of the C-24(28) sterol reductases erg4A and erg4B to produce ergosterol. Possible alternative sterol biosynthetic pathways might exist from fecosterol to ergosterol, depending on the activities of the erg3 isoforms. In Aspergillus fumigatus (strain ATCC MYA-4609 / CBS 101355 / FGSC A1100 / Af293) (Neosartorya fumigata), this protein is 3-keto-steroid reductase erg27.